Here is a 218-residue protein sequence, read N- to C-terminus: Thiamine-phosphate synthase (218 aa).

Residues 43-47 (QLRDK) and Asn-75 contribute to the 4-amino-2-methyl-5-(diphosphooxymethyl)pyrimidine site. Residues Asp-76 and Asp-95 each contribute to the Mg(2+) site. Ser-114 contributes to the 4-amino-2-methyl-5-(diphosphooxymethyl)pyrimidine binding site. 141–143 (TPT) provides a ligand contact to 2-[(2R,5Z)-2-carboxy-4-methylthiazol-5(2H)-ylidene]ethyl phosphate. Residue Lys-144 coordinates 4-amino-2-methyl-5-(diphosphooxymethyl)pyrimidine. Position 172 (Gly-172) interacts with 2-[(2R,5Z)-2-carboxy-4-methylthiazol-5(2H)-ylidene]ethyl phosphate.

This sequence belongs to the thiamine-phosphate synthase family. Mg(2+) is required as a cofactor.

The enzyme catalyses 2-[(2R,5Z)-2-carboxy-4-methylthiazol-5(2H)-ylidene]ethyl phosphate + 4-amino-2-methyl-5-(diphosphooxymethyl)pyrimidine + 2 H(+) = thiamine phosphate + CO2 + diphosphate. The catalysed reaction is 2-(2-carboxy-4-methylthiazol-5-yl)ethyl phosphate + 4-amino-2-methyl-5-(diphosphooxymethyl)pyrimidine + 2 H(+) = thiamine phosphate + CO2 + diphosphate. It catalyses the reaction 4-methyl-5-(2-phosphooxyethyl)-thiazole + 4-amino-2-methyl-5-(diphosphooxymethyl)pyrimidine + H(+) = thiamine phosphate + diphosphate. Its pathway is cofactor biosynthesis; thiamine diphosphate biosynthesis; thiamine phosphate from 4-amino-2-methyl-5-diphosphomethylpyrimidine and 4-methyl-5-(2-phosphoethyl)-thiazole: step 1/1. Functionally, condenses 4-methyl-5-(beta-hydroxyethyl)thiazole monophosphate (THZ-P) and 2-methyl-4-amino-5-hydroxymethyl pyrimidine pyrophosphate (HMP-PP) to form thiamine monophosphate (TMP). The sequence is that of Thiamine-phosphate synthase from Thermobifida fusca (strain YX).